The following is a 297-amino-acid chain: T-cell leukemia homeobox protein 3 (297 aa).

Residues 1 to 68 form a disordered region; the sequence is MEPAAGAQGP…LGGPRGGAPY (68 aa). Pro residues predominate over residues 32-52; the sequence is APPPPPPPPPPPPPPPPPPRG. The homeobox DNA-binding region spans 172–231; that stretch reads RKKPRTSFSRVQICELEKRFHRQKYLASAERAALAKSLKMTDAQVKTWFQNRRTKWRRQT.

As to expression, expression is restricted to neurons in the peripheral and central nervous system.

It localises to the nucleus. Seems to be involved in the development of cranial sensory innervation from peripheral ganglia. The sequence is that of T-cell leukemia homeobox protein 3 (TLX3) from Gallus gallus (Chicken).